The following is a 118-amino-acid chain: Pterin-4-alpha-carbinolamine dehydratase (118 aa).

This sequence belongs to the pterin-4-alpha-carbinolamine dehydratase family.

It catalyses the reaction (4aS,6R)-4a-hydroxy-L-erythro-5,6,7,8-tetrahydrobiopterin = (6R)-L-erythro-6,7-dihydrobiopterin + H2O. Its function is as follows. Involved in tetrahydrobiopterin biosynthesis. Seems to both prevent the formation of 7-pterins and accelerate the formation of quinonoid-BH2. May also have a positive regulatory role in the expression of phhA. This chain is Pterin-4-alpha-carbinolamine dehydratase (phhB), found in Pseudomonas syringae pv. tomato (strain ATCC BAA-871 / DC3000).